The chain runs to 240 residues: Acyl-coenzyme A thioesterase THEM4 (240 aa).

A mitochondrion-targeting transit peptide spans 1 to 36; it reads MLRSCAARLRTLGALCLPPVGRRLPGSEPRPELRSF. Serine 37 and serine 38 each carry phosphoserine. N6-succinyllysine is present on residues lysine 55 and lysine 66. Position 74 is an N6-acetyllysine (lysine 74). Lysine 98 is subject to N6-succinyllysine. Aspartate 161 (proton donor/acceptor) is an active-site residue. Residues asparagine 183, lysine 185, and 206 to 207 contribute to the substrate site; that span reads RK. Lysine 207 is modified (N6-succinyllysine).

It belongs to the THEM4/THEM5 thioesterase family. Homodimer and homotetramer. Interacts with AKT1 in the cytosol. Post-translationally, phosphorylated. Expressed predominantly in skeletal muscle, testis, uterus, brain and kidney. Down-regulated in glioblastoma or glioma compared to non-neoplastic brain due to promoter hypermethylation.

It is found in the cell membrane. The protein resides in the cell projection. The protein localises to the ruffle membrane. Its subcellular location is the cytoplasm. It localises to the mitochondrion. It is found in the mitochondrion inner membrane. The protein resides in the mitochondrion intermembrane space. It carries out the reaction hexadecanoyl-CoA + H2O = hexadecanoate + CoA + H(+). The catalysed reaction is octanoyl-CoA + H2O = octanoate + CoA + H(+). It catalyses the reaction decanoyl-CoA + H2O = decanoate + CoA + H(+). The enzyme catalyses dodecanoyl-CoA + H2O = dodecanoate + CoA + H(+). It carries out the reaction tetradecanoyl-CoA + H2O = tetradecanoate + CoA + H(+). The catalysed reaction is (9Z)-octadecenoyl-CoA + H2O = (9Z)-octadecenoate + CoA + H(+). It catalyses the reaction (5Z,8Z,11Z,14Z)-eicosatetraenoyl-CoA + H2O = (5Z,8Z,11Z,14Z)-eicosatetraenoate + CoA + H(+). Functionally, has acyl-CoA thioesterase activity towards medium and long-chain (C14 to C18) fatty acyl-CoA substrates, and probably plays a role in mitochondrial fatty acid metabolism. Plays a role in the apoptotic process, possibly via its regulation of AKT1 activity. According to PubMed:11598301, inhibits AKT1 phosphorylation and activity. According to PubMed:17615157, enhances AKT1 activity by favoring its phosphorylation and translocation to plasma membrane. This chain is Acyl-coenzyme A thioesterase THEM4 (THEM4), found in Homo sapiens (Human).